Consider the following 292-residue polypeptide: uncharacterized protein (292 aa).

NADP(+) is bound by residues L17, D55, N82, and K115. The active-site Proton donor is S134. The NADP(+) site is built by Y148, K152, and T184. The active-site Proton acceptor is Y148. K152 functions as the Lowers pKa of active site Tyr in the catalytic mechanism.

The protein belongs to the short-chain dehydrogenases/reductases (SDR) family.

It is found in the cytoplasm. This is an uncharacterized protein from Schizosaccharomyces pombe (strain 972 / ATCC 24843) (Fission yeast).